The following is a 162-amino-acid chain: ATP synthase subunit b', chloroplastic (162 aa).

A helical membrane pass occupies residues 26-46; it reads ATLPLQALQFILLTVLLTFIF.

It belongs to the ATPase B chain family. As to quaternary structure, F-type ATPases have 2 components, F(1) - the catalytic core - and F(0) - the membrane proton channel. F(1) has five subunits: alpha(3), beta(3), gamma(1), delta(1), epsilon(1). F(0) has four main subunits: a(1), b(1), b'(1) and c(10-14). The alpha and beta chains form an alternating ring which encloses part of the gamma chain. F(1) is attached to F(0) by a central stalk formed by the gamma and epsilon chains, while a peripheral stalk is formed by the delta, b and b' chains.

Its subcellular location is the plastid. It is found in the chloroplast thylakoid membrane. In terms of biological role, f(1)F(0) ATP synthase produces ATP from ADP in the presence of a proton or sodium gradient. F-type ATPases consist of two structural domains, F(1) containing the extramembraneous catalytic core and F(0) containing the membrane proton channel, linked together by a central stalk and a peripheral stalk. During catalysis, ATP synthesis in the catalytic domain of F(1) is coupled via a rotary mechanism of the central stalk subunits to proton translocation. Component of the F(0) channel, it forms part of the peripheral stalk, linking F(1) to F(0). The b'-subunit is a diverged and duplicated form of b found in plants and photosynthetic bacteria. The sequence is that of ATP synthase subunit b', chloroplastic from Emiliania huxleyi (Coccolithophore).